The primary structure comprises 137 residues: Large-conductance mechanosensitive channel (137 aa).

2 consecutive transmembrane segments (helical) span residues 10–30 (FAMR…AAFG) and 76–96 (GVFI…FMAI).

This sequence belongs to the MscL family. Homopentamer.

It is found in the cell inner membrane. Channel that opens in response to stretch forces in the membrane lipid bilayer. May participate in the regulation of osmotic pressure changes within the cell. This chain is Large-conductance mechanosensitive channel, found in Escherichia coli O45:K1 (strain S88 / ExPEC).